Here is a 316-residue protein sequence, read N- to C-terminus: MNQLSALKQFSIIVADTSDIKSICKYQPEDATTNPSLILQAVSSNTNQNFVDQAVQYAKKKGGLYKDQIINASDKILVDLGIEILKKIPGYISSEVDARLSFSTEASILKAKKIIDLYEEQGISRNRVLIKLAATWECIKAAEELKKDSILCNLTLLFSFAQARACAESNVFLISPFVGRIYDWYISQNLLSKSFLGKDPGVISVCKIYEYYKKYGYKTIIMGASFRNIQQILYLSGCDRLTISPVLLKELESNTAKIDRNLAPPSFISVPPVALSEEEFRWEHNQDAMAVQKLSDGIRNFGKDQLRLEKIFSKKI.

Residue Lys-131 is the Schiff-base intermediate with substrate of the active site.

Belongs to the transaldolase family. Type 1 subfamily. In terms of assembly, homodimer.

It localises to the cytoplasm. The catalysed reaction is D-sedoheptulose 7-phosphate + D-glyceraldehyde 3-phosphate = D-erythrose 4-phosphate + beta-D-fructose 6-phosphate. It participates in carbohydrate degradation; pentose phosphate pathway; D-glyceraldehyde 3-phosphate and beta-D-fructose 6-phosphate from D-ribose 5-phosphate and D-xylulose 5-phosphate (non-oxidative stage): step 2/3. Transaldolase is important for the balance of metabolites in the pentose-phosphate pathway. This Buchnera aphidicola subsp. Acyrthosiphon pisum (strain 5A) protein is Transaldolase.